A 231-amino-acid polypeptide reads, in one-letter code: Large ribosomal subunit protein uL1 (231 aa).

The protein belongs to the universal ribosomal protein uL1 family. In terms of assembly, part of the 50S ribosomal subunit.

Binds directly to 23S rRNA. The L1 stalk is quite mobile in the ribosome, and is involved in E site tRNA release. Its function is as follows. Protein L1 is also a translational repressor protein, it controls the translation of the L11 operon by binding to its mRNA. In Gluconacetobacter diazotrophicus (strain ATCC 49037 / DSM 5601 / CCUG 37298 / CIP 103539 / LMG 7603 / PAl5), this protein is Large ribosomal subunit protein uL1.